The chain runs to 78 residues: Acyl carrier protein (78 aa).

Residues S2–A77 enclose the Carrier domain. S37 carries the post-translational modification O-(pantetheine 4'-phosphoryl)serine.

Belongs to the acyl carrier protein (ACP) family. 4'-phosphopantetheine is transferred from CoA to a specific serine of apo-ACP by AcpS. This modification is essential for activity because fatty acids are bound in thioester linkage to the sulfhydryl of the prosthetic group.

The protein localises to the cytoplasm. It participates in lipid metabolism; fatty acid biosynthesis. In terms of biological role, carrier of the growing fatty acid chain in fatty acid biosynthesis. The polypeptide is Acyl carrier protein (Vibrio vulnificus (strain CMCP6)).